A 195-amino-acid polypeptide reads, in one-letter code: MQPNITGVILAGGRSSRMGGNDKGLIPLNGKPLFQYVIDRFKPQVSDLLINANRNQGLYKESGIPVIDDIITGFVGPLAGMHAGLSYASTEWVVFAPCDVPALPSDLVSQLWQGKKQALAAYANDDERAHPTFALMHISLKTQLADYLIRGDRKLMLFLDSINAQRVKFSGKADLFSNLNTPADCDLWEQKRRGQ.

GTP is bound by residues 10-12 (LAG), Lys-23, Asn-51, Asp-69, and Asp-99. Position 99 (Asp-99) interacts with Mg(2+).

This sequence belongs to the MobA family. Monomer. Mg(2+) serves as cofactor.

It is found in the cytoplasm. It catalyses the reaction Mo-molybdopterin + GTP + H(+) = Mo-molybdopterin guanine dinucleotide + diphosphate. Its function is as follows. Transfers a GMP moiety from GTP to Mo-molybdopterin (Mo-MPT) cofactor (Moco or molybdenum cofactor) to form Mo-molybdopterin guanine dinucleotide (Mo-MGD) cofactor. The chain is Molybdenum cofactor guanylyltransferase from Yersinia pseudotuberculosis serotype O:1b (strain IP 31758).